Consider the following 544-residue polypeptide: Glucose-6-phosphate isomerase (544 aa).

The active-site Proton donor is E354. Active-site residues include H385 and K510.

The protein belongs to the GPI family.

Its subcellular location is the cytoplasm. The enzyme catalyses alpha-D-glucose 6-phosphate = beta-D-fructose 6-phosphate. Its pathway is carbohydrate biosynthesis; gluconeogenesis. It functions in the pathway carbohydrate degradation; glycolysis; D-glyceraldehyde 3-phosphate and glycerone phosphate from D-glucose: step 2/4. In terms of biological role, catalyzes the reversible isomerization of glucose-6-phosphate to fructose-6-phosphate. The chain is Glucose-6-phosphate isomerase from Deinococcus deserti (strain DSM 17065 / CIP 109153 / LMG 22923 / VCD115).